A 267-amino-acid polypeptide reads, in one-letter code: Tryptophan synthase alpha chain (267 aa).

Catalysis depends on proton acceptor residues Glu49 and Asp60.

Belongs to the TrpA family. In terms of assembly, tetramer of two alpha and two beta chains.

The enzyme catalyses (1S,2R)-1-C-(indol-3-yl)glycerol 3-phosphate + L-serine = D-glyceraldehyde 3-phosphate + L-tryptophan + H2O. The protein operates within amino-acid biosynthesis; L-tryptophan biosynthesis; L-tryptophan from chorismate: step 5/5. Functionally, the alpha subunit is responsible for the aldol cleavage of indoleglycerol phosphate to indole and glyceraldehyde 3-phosphate. The polypeptide is Tryptophan synthase alpha chain (Carboxydothermus hydrogenoformans (strain ATCC BAA-161 / DSM 6008 / Z-2901)).